Consider the following 86-residue polypeptide: Anti-adapter protein IraP (86 aa).

Positions 1–38 (MKNLIAELLVKLAQKEEEAKELTVQVEALEIVVTALLR) form a coiled coil.

The protein belongs to the IraP family. In terms of assembly, interacts with RssB.

Its subcellular location is the cytoplasm. In terms of biological role, inhibits RpoS proteolysis by regulating RssB activity, thereby increasing the stability of the sigma stress factor RpoS especially during phosphate starvation, but also in stationary phase and during nitrogen starvation. Its effect on RpoS stability is due to its interaction with RssB, which probably blocks the interaction of RssB with RpoS, and the consequent delivery of the RssB-RpoS complex to the ClpXP protein degradation pathway. The protein is Anti-adapter protein IraP of Klebsiella pneumoniae subsp. pneumoniae (strain ATCC 700721 / MGH 78578).